The primary structure comprises 32 residues: Lectin (32 aa).

The protein belongs to the leguminous lectin family. In terms of assembly, homotetramer.

In terms of biological role, metalloglycoprotein, containing Ca, Mg, Mn, and Zn and the carbohydrates galactose, glucosamine, mannose, and fucose. It agglutinates erythrocytes of blood group A1. The polypeptide is Lectin (Macrotyloma axillare (Perennial horse gram)).